A 186-amino-acid polypeptide reads, in one-letter code: GTP cyclohydrolase 1 1 (186 aa).

Belongs to the GTP cyclohydrolase I family. In terms of assembly, homomer.

The catalysed reaction is GTP + H2O = 7,8-dihydroneopterin 3'-triphosphate + formate + H(+). The protein operates within cofactor biosynthesis; 7,8-dihydroneopterin triphosphate biosynthesis; 7,8-dihydroneopterin triphosphate from GTP: step 1/1. The protein is GTP cyclohydrolase 1 1 (folE1) of Pseudomonas aeruginosa (strain ATCC 15692 / DSM 22644 / CIP 104116 / JCM 14847 / LMG 12228 / 1C / PRS 101 / PAO1).